We begin with the raw amino-acid sequence, 217 residues long: Biogenesis of lysosome-related organelles complex 1 subunit 4 (217 aa).

Residues Met1–Asp57 are disordered. Residues Asp29–Ser41 are compositionally biased toward polar residues. Positions Asp136–Thr165 form a coiled coil. At Thr165 the chain carries Phosphothreonine.

It belongs to the BLOC1S4 family. In terms of assembly, interacts with BLOC1S5 and BLOC1S6. Component of the biogenesis of lysosome-related organelles complex 1 (BLOC-1) composed of BLOC1S1, BLOC1S2, BLOC1S3, BLOC1S4, BLOC1S5, BLOC1S6, DTNBP1/BLOC1S7 and SNAPIN/BLOC1S8. Octamer composed of one copy each BLOC1S1, BLOC1S2, BLOC1S3, BLOC1S4, BLOC1S5, BLOC1S6, DTNBP1/BLOC1S7 and SNAPIN/BLOC1S8. The BLOC-1 complex associates with the AP-3 protein complex and membrane protein cargos.

It localises to the cytoplasm. Functionally, component of the BLOC-1 complex, a complex that is required for normal biogenesis of lysosome-related organelles (LRO), such as platelet dense granules and melanosomes. In concert with the AP-3 complex, the BLOC-1 complex is required to target membrane protein cargos into vesicles assembled at cell bodies for delivery into neurites and nerve terminals. The BLOC-1 complex, in association with SNARE proteins, is also proposed to be involved in neurite extension. Plays a role in intracellular vesicle trafficking. This chain is Biogenesis of lysosome-related organelles complex 1 subunit 4 (BLOC1S4), found in Homo sapiens (Human).